A 211-amino-acid polypeptide reads, in one-letter code: Large ribosomal subunit protein uL4 (211 aa).

The span at 41-53 (QAHSRQGTASTLT) shows a compositional bias: polar residues. A disordered region spans residues 41-85 (QAHSRQGTASTLTRAEVRGGGRKPYKQKGTGRARQGSIRTPLRPG). The segment covering 60–71 (GGRKPYKQKGTG) has biased composition (basic residues).

This sequence belongs to the universal ribosomal protein uL4 family. In terms of assembly, part of the 50S ribosomal subunit.

Functionally, one of the primary rRNA binding proteins, this protein initially binds near the 5'-end of the 23S rRNA. It is important during the early stages of 50S assembly. It makes multiple contacts with different domains of the 23S rRNA in the assembled 50S subunit and ribosome. Forms part of the polypeptide exit tunnel. This Prochlorococcus marinus (strain SARG / CCMP1375 / SS120) protein is Large ribosomal subunit protein uL4.